A 359-amino-acid chain; its full sequence is MPLSRLIINDFRNITTCDIQLSPGFNFVIGPNGSGKTSVLEAIYLLGHGRSFKSSLTGRIIRNDCDELFIHGRFTTPELFELPIGINKQRDGTTEVKIGGESGQKLAQLAKVLPLQLIHPEGFELVTDGPKFRRAFIDWGVFHVEPAFYDAWSRVKRLTKQRNALLKTANSYRELSYWDLELAQLSEKIDQWRVDYINHISEATQQICQAFLPEYDIKLSYYRGWDRETPYAELLKKNFERDKQLGYTVGGPNKADLRIKVAGTPVEDVLSRGQLKLMVCALRLAQGQHLTEATGKQCIYLIDDFASELDSHRRQLLAQYLKQTKAQVFISSITAEQIADMHDDESKMFEIEHGKIAQG.

ATP is bound at residue 30–37 (GPNGSGKT).

This sequence belongs to the RecF family.

It is found in the cytoplasm. Functionally, the RecF protein is involved in DNA metabolism; it is required for DNA replication and normal SOS inducibility. RecF binds preferentially to single-stranded, linear DNA. It also seems to bind ATP. In Aliivibrio fischeri (strain MJ11) (Vibrio fischeri), this protein is DNA replication and repair protein RecF.